We begin with the raw amino-acid sequence, 287 residues long: NAD-dependent protein deacylase sir-2.3 (287 aa).

In terms of domain architecture, Deacetylase sirtuin-type spans 10–287; the sequence is TELCENSLKK…YRISDVLKEM (278 aa). NAD(+) is bound by residues 35–55 and 116–119; these read GAGI…VGLY and QNVD. The active-site Proton acceptor is His-134. Zn(2+) contacts are provided by Cys-142, Cys-145, Cys-196, and Cys-199. NAD(+)-binding positions include 236-238, 262-264, and Ile-280; these read GTS and NIG.

This sequence belongs to the sirtuin family. Class II subfamily. In terms of assembly, interacts with pyc-1, pcca-1 and mccc-1. Requires Zn(2+) as cofactor. Ubiquitously expressed with high expression in the pharynx, body wall muscles and gonad. Strong expression in a subset of non-neuronal cells in the head.

The protein resides in the mitochondrion matrix. It localises to the mitochondrion. It catalyses the reaction N(6)-acetyl-L-lysyl-[protein] + NAD(+) + H2O = 2''-O-acetyl-ADP-D-ribose + nicotinamide + L-lysyl-[protein]. NAD-dependent protein deacylase. Catalyzes the NAD-dependent hydrolysis of acyl groups from lysine residues. Plays a role in oxidative stress resistance. Might promote neuronal cell death under ischemic conditions and cell death in touch neurons induced by mec-4 channel hyperactivation, possibly downstream of the insulin-like receptor daf-2. Might attenuate the reactive oxygen species (ROS) scavenging system, that eliminates ROS in ischemic conditions, under dietary deprivation and when glycolysis is blocked. In Caenorhabditis elegans, this protein is NAD-dependent protein deacylase sir-2.3 (sir-2.3).